A 212-amino-acid polypeptide reads, in one-letter code: 3-oxo-tetronate 4-phosphate decarboxylase (212 aa).

Glutamate 79 serves as the catalytic Proton acceptor. The Zn(2+) site is built by glutamate 79, histidine 98, and histidine 100. Tyrosine 125 serves as the catalytic Proton donor. Position 165 (histidine 165) interacts with Zn(2+).

This sequence belongs to the aldolase class II family. AraD/FucA subfamily. It depends on Zn(2+) as a cofactor.

It carries out the reaction 3-dehydro-4-O-phospho-D-erythronate + H(+) = dihydroxyacetone phosphate + CO2. The catalysed reaction is 3-dehydro-4-O-phospho-L-erythronate + H(+) = dihydroxyacetone phosphate + CO2. Functionally, catalyzes the decarboxylation of 3-oxo-tetronate 4-phosphate to dihydroxyacetone phosphate (DHAP) and CO(2). The sequence is that of 3-oxo-tetronate 4-phosphate decarboxylase from Escherichia coli (strain K12).